A 434-amino-acid chain; its full sequence is D-amino acid dehydrogenase (434 aa).

3–17 (VVILGSGVVGVASAW) provides a ligand contact to FAD.

It belongs to the DadA oxidoreductase family. FAD serves as cofactor.

It catalyses the reaction a D-alpha-amino acid + A + H2O = a 2-oxocarboxylate + AH2 + NH4(+). The protein operates within amino-acid degradation; D-alanine degradation; NH(3) and pyruvate from D-alanine: step 1/1. Its function is as follows. Oxidative deamination of D-amino acids. This chain is D-amino acid dehydrogenase, found in Yersinia enterocolitica serotype O:8 / biotype 1B (strain NCTC 13174 / 8081).